Here is a 107-residue protein sequence, read N- to C-terminus: Ferredoxin (107 aa).

2 consecutive 4Fe-4S ferredoxin-type domains span residues 2 to 30 (TYVV…YEGE) and 31 to 60 (FMLV…PETP). The [3Fe-4S] cluster site is built by Cys-9 and Cys-17. Cys-21, Cys-40, Cys-43, and Cys-46 together coordinate [4Fe-4S] cluster. Residue Cys-50 coordinates [3Fe-4S] cluster.

It depends on [4Fe-4S] cluster as a cofactor. [3Fe-4S] cluster is required as a cofactor.

Functionally, ferredoxins are iron-sulfur proteins that transfer electrons in a wide variety of metabolic reactions. This is Ferredoxin (fdxA) from Rickettsia bellii (strain RML369-C).